The sequence spans 373 residues: 4-hydroxy-3-methylbut-2-en-1-yl diphosphate synthase (flavodoxin) (373 aa).

The [4Fe-4S] cluster site is built by Cys270, Cys273, Cys305, and Glu312.

The protein belongs to the IspG family. The cofactor is [4Fe-4S] cluster.

It catalyses the reaction (2E)-4-hydroxy-3-methylbut-2-enyl diphosphate + oxidized [flavodoxin] + H2O + 2 H(+) = 2-C-methyl-D-erythritol 2,4-cyclic diphosphate + reduced [flavodoxin]. It functions in the pathway isoprenoid biosynthesis; isopentenyl diphosphate biosynthesis via DXP pathway; isopentenyl diphosphate from 1-deoxy-D-xylulose 5-phosphate: step 5/6. In terms of biological role, converts 2C-methyl-D-erythritol 2,4-cyclodiphosphate (ME-2,4cPP) into 1-hydroxy-2-methyl-2-(E)-butenyl 4-diphosphate. This chain is 4-hydroxy-3-methylbut-2-en-1-yl diphosphate synthase (flavodoxin), found in Klebsiella pneumoniae subsp. pneumoniae (strain ATCC 700721 / MGH 78578).